The primary structure comprises 343 residues: uncharacterized protein (343 aa).

Positions threonine 66–alanine 89 are disordered. A compositionally biased stretch (low complexity) spans proline 71 to serine 84. Residues glycine 96 to phenylalanine 116 form a helical membrane-spanning segment. 2 disordered regions span residues glycine 161–arginine 191 and glycine 252–phenylalanine 343. Residues methionine 165–asparagine 188 are compositionally biased toward polar residues. Residues serine 280–leucine 289 show a composition bias toward basic and acidic residues. The span at lysine 290–glutamate 299 shows a compositional bias: low complexity. Basic and acidic residues-rich tracts occupy residues leucine 301 to serine 311 and serine 322 to lysine 333. The span at lysine 334–phenylalanine 343 shows a compositional bias: basic residues.

The protein resides in the golgi apparatus membrane. This is an uncharacterized protein from Schizosaccharomyces pombe (strain 972 / ATCC 24843) (Fission yeast).